We begin with the raw amino-acid sequence, 572 residues long: Myb-like protein Y (572 aa).

Residues 196-211 are compositionally biased toward polar residues; it reads QSQSQLPTATNNNNKQ. The tract at residues 196–283 is disordered; the sequence is QSQSQLPTAT…NNNNNNNNNE (88 aa). Composition is skewed to low complexity over residues 222–237 and 260–281; these read TATA…TTTT and NDNN…NNNN. A Myb-like domain is found at 311-360; the sequence is PWTVEDQKKLEDALTKYPPSRFSSVSRWQMVSKELGISPKAVALRYNQML. A disordered region spans residues 367 to 456; it reads KPSLQQQQQQ…TTVTPNMTTP (90 aa). Low complexity-rich tracts occupy residues 371–392 and 414–425; these read QQQQ…TTTT and SSFSSPSSSSKE. Over residues 426 to 435 the composition is skewed to basic and acidic residues; it reads SPNKKEKTTH. Low complexity predominate over residues 436–455; that stretch reads DTTTTTNTATTTTVTPNMTT.

This is Myb-like protein Y (mybY) from Dictyostelium discoideum (Social amoeba).